Reading from the N-terminus, the 178-residue chain is Ribulose bisphosphate carboxylase small subunit, chloroplastic (178 aa).

The N-terminal 54 residues, 1–54 (MASSMISSPAVTTVNRAGAGTVAPFTGLKSMAGFPTRKTNNDIASIASNGGRVQ), are a transit peptide targeting the chloroplast.

Belongs to the RuBisCO small chain family. As to quaternary structure, heterohexadecamer of 8 large and 8 small subunits.

The protein resides in the plastid. The protein localises to the chloroplast. In terms of biological role, ruBisCO catalyzes two reactions: the carboxylation of D-ribulose 1,5-bisphosphate, the primary event in carbon dioxide fixation, as well as the oxidative fragmentation of the pentose substrate. Both reactions occur simultaneously and in competition at the same active site. Although the small subunit is not catalytic it is essential for maximal activity. In Glycine tomentella (Woolly glycine), this protein is Ribulose bisphosphate carboxylase small subunit, chloroplastic.